Here is a 289-residue protein sequence, read N- to C-terminus: MQGVYPAIVTPFKDGKVDYDGLRTNIDFLIENGISGVIPVGTTGESPTLTPLEHEKVIENVVEFVDGRVEVIAGTGSNSTSEALEFSQYAEDIGVDGVLLITPYYNKPTQEGLKRHFGEIANSINVPIALYNVPSRTALNIEPETIKYLFEEYSNITAIKEANPNLSQVSEVLDSCNIDVLSGNDELTLPIISLGGKGVVSVIANIAPKEFVQMVDFANAGKFDKAKEIHYKLFPIMKLMFVETNPIPIKTAMNMLGMPSGELRLPLCEMAEGNKLKLQNALNTVGLLK.

Threonine 43 contributes to the pyruvate binding site. Tyrosine 131 acts as the Proton donor/acceptor in catalysis. Lysine 160 acts as the Schiff-base intermediate with substrate in catalysis. Residue valine 200 coordinates pyruvate.

Belongs to the DapA family. As to quaternary structure, homotetramer; dimer of dimers.

The protein localises to the cytoplasm. It catalyses the reaction L-aspartate 4-semialdehyde + pyruvate = (2S,4S)-4-hydroxy-2,3,4,5-tetrahydrodipicolinate + H2O + H(+). Its pathway is amino-acid biosynthesis; L-lysine biosynthesis via DAP pathway; (S)-tetrahydrodipicolinate from L-aspartate: step 3/4. Catalyzes the condensation of (S)-aspartate-beta-semialdehyde [(S)-ASA] and pyruvate to 4-hydroxy-tetrahydrodipicolinate (HTPA). The protein is 4-hydroxy-tetrahydrodipicolinate synthase of Methanococcus maripaludis (strain C5 / ATCC BAA-1333).